A 175-amino-acid polypeptide reads, in one-letter code: Ribosome maturation factor RimM (175 aa).

Residues glutamate 96 to phenylalanine 175 enclose the PRC barrel domain.

This sequence belongs to the RimM family. In terms of assembly, binds ribosomal protein uS19.

The protein resides in the cytoplasm. In terms of biological role, an accessory protein needed during the final step in the assembly of 30S ribosomal subunit, possibly for assembly of the head region. Essential for efficient processing of 16S rRNA. May be needed both before and after RbfA during the maturation of 16S rRNA. It has affinity for free ribosomal 30S subunits but not for 70S ribosomes. The polypeptide is Ribosome maturation factor RimM (Histophilus somni (strain 129Pt) (Haemophilus somnus)).